Here is a 323-residue protein sequence, read N- to C-terminus: Thymidylate synthase (323 aa).

Residues Arg21 and 172 to 173 (RR) each bind dUMP. The active-site Nucleophile is the Cys192. DUMP contacts are provided by residues 214-217 (RSND), Asn225, and 255-257 (HVY). Position 217 (Asp217) interacts with (6R)-5,10-methylene-5,6,7,8-tetrahydrofolate. Residue Ala322 coordinates (6R)-5,10-methylene-5,6,7,8-tetrahydrofolate.

Belongs to the thymidylate synthase family. Bacterial-type ThyA subfamily. In terms of assembly, homodimer.

It is found in the cytoplasm. The catalysed reaction is dUMP + (6R)-5,10-methylene-5,6,7,8-tetrahydrofolate = 7,8-dihydrofolate + dTMP. It functions in the pathway pyrimidine metabolism; dTTP biosynthesis. Functionally, catalyzes the reductive methylation of 2'-deoxyuridine-5'-monophosphate (dUMP) to 2'-deoxythymidine-5'-monophosphate (dTMP) while utilizing 5,10-methylenetetrahydrofolate (mTHF) as the methyl donor and reductant in the reaction, yielding dihydrofolate (DHF) as a by-product. This enzymatic reaction provides an intracellular de novo source of dTMP, an essential precursor for DNA biosynthesis. This Pseudomonas syringae pv. tomato (strain ATCC BAA-871 / DC3000) protein is Thymidylate synthase.